Consider the following 237-residue polypeptide: Ribonuclease PH (237 aa).

Phosphate-binding positions include Arg86 and 124-126; that span reads GTR.

This sequence belongs to the RNase PH family. In terms of assembly, homohexameric ring arranged as a trimer of dimers.

The catalysed reaction is tRNA(n+1) + phosphate = tRNA(n) + a ribonucleoside 5'-diphosphate. Phosphorolytic 3'-5' exoribonuclease that plays an important role in tRNA 3'-end maturation. Removes nucleotide residues following the 3'-CCA terminus of tRNAs; can also add nucleotides to the ends of RNA molecules by using nucleoside diphosphates as substrates, but this may not be physiologically important. Probably plays a role in initiation of 16S rRNA degradation (leading to ribosome degradation) during starvation. This is Ribonuclease PH from Methylocella silvestris (strain DSM 15510 / CIP 108128 / LMG 27833 / NCIMB 13906 / BL2).